The following is a 382-amino-acid chain: Probable G-protein coupled receptor 132 (382 aa).

The Extracellular portion of the chain corresponds to 1–42; it reads MRSEPTNAAGNTTLGVTSVLQSTSVPSSETCHVSYEESRVVL. Asn11 carries an N-linked (GlcNAc...) asparagine glycan. Residues 43-65 form a helical membrane-spanning segment; sequence VVVYSAVCLLGLPANCLTAWLTL. Over 66-76 the chain is Cytoplasmic; that stretch reads LQVLQRNVLAV. The chain crosses the membrane as a helical span at residues 77-99; sequence YLFCLSLCELLYISTVPLWIIYI. At 100 to 113 the chain is on the extracellular side; the sequence is QNQHKWNLGPQACK. The cysteines at positions 112 and 184 are disulfide-linked. The chain crosses the membrane as a helical span at residues 114-135; it reads VTAYIFFCNIYISILLLCCISC. Topologically, residues 136–155 are cytoplasmic; it reads DRYMAVVYALESRGHRHQRT. Residues 156–175 form a helical membrane-spanning segment; the sequence is AVTISACVILLVGLVNYPVF. Over 176 to 198 the chain is Extracellular; that stretch reads DMKVEKSFCFEPLRMNSKIAGYH. The chain crosses the membrane as a helical span at residues 199–221; the sequence is YLRFTFGFAIPLGILAFTNHQIF. Residues 222-241 lie on the Cytoplasmic side of the membrane; the sequence is RSIKLSDSLSAAQKNKVKRS. A helical transmembrane segment spans residues 242 to 261; it reads AIAVVTIFLVCFAPYHVVLL. The Extracellular segment spans residues 262-286; it reads VKAASFSFYQGDMDAVCAFESRLYT. A helical transmembrane segment spans residues 287-309; the sequence is VSMVFLCLSTVNSVADPIIYVLG. Residues 310 to 382 are Cytoplasmic-facing; sequence TDHSRQEVSR…SPERLPEELC (73 aa).

This sequence belongs to the G-protein coupled receptor 1 family. In terms of tissue distribution, highly expressed in hematopoietic tissues rich in lymphocytes like spleen and thymus. Weakly expressed in heart and lung. Highly expressed in infiltrating macrophages within atherosclerotic lesions.

The protein resides in the cell membrane. Functionally, may be a receptor for oxidized free fatty acids derived from linoleic and arachidonic acids such as 9-hydroxyoctadecadienoic acid (9-HODE). Activates a G alpha protein, most likely G alpha(q). May be involved in apoptosis. Functions at the G2/M checkpoint to delay mitosis. May function as a sensor that monitors the oxidative states and mediates appropriate cellular responses such as secretion of paracrine signals and attenuation of proliferation. May mediate ths accumulation of intracellular inositol phosphates at acidic pH through proton-sensing activity. In Mus musculus (Mouse), this protein is Probable G-protein coupled receptor 132 (Gpr132).